Reading from the N-terminus, the 437-residue chain is Phosphomethylpyrimidine synthase (437 aa).

Substrate is bound by residues Asn-69, Met-98, Tyr-127, His-163, 185-187, 226-229, and Glu-265; these read SRG and DACR. Zn(2+) is bound at residue His-269. Tyr-292 lines the substrate pocket. His-333 provides a ligand contact to Zn(2+). 3 residues coordinate [4Fe-4S] cluster: Cys-409, Cys-412, and Cys-416.

The protein belongs to the ThiC family. Requires [4Fe-4S] cluster as cofactor.

The enzyme catalyses 5-amino-1-(5-phospho-beta-D-ribosyl)imidazole + S-adenosyl-L-methionine = 4-amino-2-methyl-5-(phosphooxymethyl)pyrimidine + CO + 5'-deoxyadenosine + formate + L-methionine + 3 H(+). It functions in the pathway cofactor biosynthesis; thiamine diphosphate biosynthesis. Functionally, catalyzes the synthesis of the hydroxymethylpyrimidine phosphate (HMP-P) moiety of thiamine from aminoimidazole ribotide (AIR) in a radical S-adenosyl-L-methionine (SAM)-dependent reaction. This Clostridium kluyveri (strain NBRC 12016) protein is Phosphomethylpyrimidine synthase.